The primary structure comprises 419 residues: Putative zinc metalloprotease SPy_1963/M5005_Spy1674 (419 aa).

A Zn(2+)-binding site is contributed by His-18. Glu-19 is a catalytic residue. His-22 is a binding site for Zn(2+). Helical transmembrane passes span 169-191 (LITN…ILLV), 301-323 (LAWS…FSLN), 343-365 (LESV…LIPI), and 392-411 (AYIT…AVTW). Positions 175-274 (GPMNNFILGI…LKTVAVKPQK (100 aa)) constitute a PDZ domain.

It belongs to the peptidase M50B family. It depends on Zn(2+) as a cofactor.

Its subcellular location is the cell membrane. This is Putative zinc metalloprotease SPy_1963/M5005_Spy1674 from Streptococcus pyogenes serotype M1.